The following is a 386-amino-acid chain: Putative prophage major tail sheath protein (386 aa).

It belongs to the myoviridae tail sheath protein family.

It is found in the secreted. This chain is Putative prophage major tail sheath protein, found in Pseudomonas aeruginosa (strain UCBPP-PA14).